The chain runs to 580 residues: DNA ligase B (580 aa).

The active-site N6-AMP-lysine intermediate is the Lys135.

This sequence belongs to the NAD-dependent DNA ligase family. LigB subfamily.

It carries out the reaction NAD(+) + (deoxyribonucleotide)n-3'-hydroxyl + 5'-phospho-(deoxyribonucleotide)m = (deoxyribonucleotide)n+m + AMP + beta-nicotinamide D-nucleotide.. Functionally, catalyzes the formation of phosphodiester linkages between 5'-phosphoryl and 3'-hydroxyl groups in double-stranded DNA using NAD as a coenzyme and as the energy source for the reaction. In Photorhabdus laumondii subsp. laumondii (strain DSM 15139 / CIP 105565 / TT01) (Photorhabdus luminescens subsp. laumondii), this protein is DNA ligase B.